The chain runs to 112 residues: Ciliary microtubule inner protein 3 (112 aa).

The segment at 1–34 is disordered; sequence MCKDSQKPSVPSHGPKTPSCKGVKAPHSSRPRAW.

Belongs to the CIMIP3-like family.

The protein resides in the cytoplasm. It is found in the cytoskeleton. Its subcellular location is the flagellum axoneme. The polypeptide is Ciliary microtubule inner protein 3 (Homo sapiens (Human)).